Here is a 286-residue protein sequence, read N- to C-terminus: ATP synthase gamma chain (286 aa).

Belongs to the ATPase gamma chain family. F-type ATPases have 2 components, CF(1) - the catalytic core - and CF(0) - the membrane proton channel. CF(1) has five subunits: alpha(3), beta(3), gamma(1), delta(1), epsilon(1). CF(0) has three main subunits: a, b and c.

The protein localises to the cell inner membrane. In terms of biological role, produces ATP from ADP in the presence of a proton gradient across the membrane. The gamma chain is believed to be important in regulating ATPase activity and the flow of protons through the CF(0) complex. The sequence is that of ATP synthase gamma chain from Pseudoalteromonas translucida (strain TAC 125).